We begin with the raw amino-acid sequence, 1259 residues long: uncharacterized protein (1259 aa).

The segment at 354–410 (KLNQAGGKRNSSMNNSTQNNNSSRSNNSARNNNSVWNNNNSAWKNNNSAWNDNSSWK) is disordered. A compositionally biased stretch (low complexity) spans 362–410 (RNSSMNNSTQNNNSSRSNNSARNNNSVWNNNNSAWKNNNSAWNDNSSWK).

The protein resides in the virion. This is an uncharacterized protein from Acanthamoeba polyphaga (Amoeba).